A 261-amino-acid polypeptide reads, in one-letter code: ClpXP adapter protein SpxH (261 aa).

It belongs to the SpxH family. As to quaternary structure, interacts with Spx.

The protein resides in the cytoplasm. Its function is as follows. Adapter protein required for efficient degradation of Spx by ClpXP under non-stress conditions. Interaction with Spx stabilizes Spx and exposes the C-terminus of Spx for recognition and proteolysis by ClpXP. In Staphylococcus aureus, this protein is ClpXP adapter protein SpxH.